Here is an 88-residue protein sequence, read N- to C-terminus: Small ribosomal subunit protein uS15c (88 aa).

Belongs to the universal ribosomal protein uS15 family. As to quaternary structure, part of the 30S ribosomal subunit.

Its subcellular location is the plastid. The protein localises to the chloroplast. This Arabis hirsuta (Hairy rock-cress) protein is Small ribosomal subunit protein uS15c (rps15).